The following is a 969-amino-acid chain: MLDFLKRFFGSSQERTLKKFQKLVDKVNLYDEMLAPLSDEELRNKTGELKKRYQEGESLDDMLPEAYAVVKNVCRRLTGTPVEVSGYHQNWDMVPYDVQVLGAIAMHKGFITEMQTGEGKTLTAVMPLYLNALTGKPVHLVTVNDYLAQRDCEWVGSILRWLGLTTGVLISGSPLEKRKEIYRCDVVYGTASEFGFDYLRDNSIATSVDEQVGRGFYFAIIDEVDSILIDEARTPLIISGPGEKHNPVYFELKDKVAELVQLQRELCNQLALEARRGLEHFLDMDILPKDKKVIEGISEFCRSLWLVSKGMPLNRVLRRVREHPDLRAMIDKWDTYYHAEQNKEESIEKLSQLYIIVDEHNNDFELTDRGMQQWVEKAGGSAEDFVMIDMGHEYALIDSDESLSPTDKINRKIAVSEEDTQRKARAHGLRQLLRAHLLMERDVDYIVRNDQIVIIDEHTGRPQPGRRFSEGLHQAIESKEHVTIRKESQTFATITLQNFFRLYEKLAGMTGTAITESKEFKEIYNLYVLQVPTFKTCLRIDHNDEFYMTEREKYHAIVNEIARIHKDGNPILIGTESVEVSEKLSRILKQNRIEHTVLNAKNHAQEAEIIAAAGKLGAVTVATNMAGRGTDIKLDEEAVVVGGLHVIGTSRHQSRRIDRQLRGRCARLGDPGAAKFFLSFEDRLMRLFASPKLNALIRHFRPPEGEAMSDPMFNKLIETAQKRVEARNYTIRKHTLEYDDVMNKQRQTIYAFRNEVLRSEDIFALAKESINHVALMIASLIMSREHPAGHSLPILEEWMNYSFPLQLNIEELRRLPSLDAIAEKVADELTGAFQNKFSSMVEEITAAAGNDVDANGICKDIIRSVMIMHIDEQWKIHLVDMDLLRSEVGLRTVGQKDPLLEFKHESFLLFESLIRDIRIAIVKHLFRLELTMTREQRPQNVIPVVATSFQNDENFGPMELTIISDSDDE.

ATP contacts are provided by residues Q99, 117-121 (GEGKT), and D631.

Belongs to the SecA family. Monomer and homodimer. Part of the essential Sec protein translocation apparatus which comprises SecA, SecYEG and auxiliary proteins SecDF. Other proteins may also be involved.

Its subcellular location is the cell inner membrane. The protein resides in the cytoplasm. The enzyme catalyses ATP + H2O + cellular proteinSide 1 = ADP + phosphate + cellular proteinSide 2.. Its function is as follows. Part of the Sec protein translocase complex. Interacts with the SecYEG preprotein conducting channel. Has a central role in coupling the hydrolysis of ATP to the transfer of proteins into and across the cell membrane, serving as an ATP-driven molecular motor driving the stepwise translocation of polypeptide chains across the membrane. In Chlamydia felis (strain Fe/C-56) (Chlamydophila felis), this protein is Protein translocase subunit SecA.